Reading from the N-terminus, the 302-residue chain is Dioxygenase olcK (302 aa).

Residues H136, D138, and H213 each coordinate Fe cation.

It belongs to the PhyH family. As to quaternary structure, homodimer. Fe cation serves as cofactor.

Its subcellular location is the peroxisome matrix. It functions in the pathway secondary metabolite biosynthesis; terpenoid biosynthesis. Functionally, dioxygenase; part of the gene cluster that mediates the biosynthesis of 15-deoxyoxalicine B. The first step of the pathway is the synthesis of nicotinyl-CoA from nicotinic acid by the nicotinic acid-CoA ligase olcI. Nicotinyl-CoA is then a substrate of polyketide synthase olcA to produce 4-hydroxy-6-(3-pyridinyl)-2H-pyran-2-one (HPPO) which is further prenylated by the polyprenyl transferase olcH to yield geranylgeranyl-HPPO. Geranylgeranyl pyrophosphate is provided by the cluster-specific geranylgeranyl pyrophosphate synthase olcC. The FAD-dependent monooxygenase olcE catalyzes the epoxidation of geranylgeranyl-HPPO and the terpene cyclase olcD catalyzes the cyclization of the terpenoid component, resulting in the formation of the tricyclic terpene moiety seen in predecaturin E. The cytochrome P450 monooxygenase then catalyzes the allylic oxidation of predecaturin E, which is followed by spirocylization with concomitant loss of one molecule of water to form decaturin E. Decaturin E is the substrate of the cytochrome P450 monooxygenase olcJ which hydroxylates it at the C-29 position to form decaturin F. The short-chain dehydrogenase/reductase olcF may catalyze the oxidation of decaturin F to generate the 29-hydroxyl-27-one intermediate, and subsequent hemiacetal formation probably leads to the formation of decaturin C. The dioxygenase olcK may be a peroxisomal enzyme that catalyzes the hydroxylation of decaturin C into decaturin A once decaturin C is shuttled into the peroxisome by the MFS transporter olcL. Finally the cytochrome P450 monooxygenase olcB catalyzes the oxidative rearrangement to yield 15-deoxyoxalicine B. In the absence of olcJ, decaturin E may be shunted to a pathway in which it is oxidized to a ketone, possibly by olcF, to form decaturin D, which undergoes further allylic oxidation to yield decaturin G. Moreover, in the absence of oclK or oclL, oclB can convert decaturin C into 15-deoxyoxalicine A. This Penicillium canescens protein is Dioxygenase olcK.